Reading from the N-terminus, the 148-residue chain is Deoxyuridine 5'-triphosphate nucleotidohydrolase (148 aa).

Residues R68–G70, N81, T85–D87, and K95 each bind substrate.

It belongs to the dUTPase family. It depends on Mg(2+) as a cofactor.

It carries out the reaction dUTP + H2O = dUMP + diphosphate + H(+). It participates in pyrimidine metabolism; dUMP biosynthesis; dUMP from dCTP (dUTP route): step 2/2. In terms of biological role, this enzyme is involved in nucleotide metabolism: it produces dUMP, the immediate precursor of thymidine nucleotides and it decreases the intracellular concentration of dUTP so that uracil cannot be incorporated into DNA. The chain is Deoxyuridine 5'-triphosphate nucleotidohydrolase from Rickettsia peacockii (strain Rustic).